The chain runs to 249 residues: Triosephosphate isomerase (249 aa).

Residues Asn12 and Lys14 each coordinate substrate. At Lys14 the chain carries N6-acetyllysine. Tyr68 is subject to 3'-nitrotyrosine. Ser80 bears the Phosphoserine mark. The active-site Electrophile is His96. Ser106 carries the post-translational modification Phosphoserine. Lys142 is covalently cross-linked (Glycyl lysine isopeptide (Lys-Gly) (interchain with G-Cter in SUMO1)). An N6-succinyllysine modification is found at Lys149. Position 156 is an N6-acetyllysine; alternate (Lys156). Lys156 carries the post-translational modification N6-succinyllysine; alternate. Position 159 is a phosphoserine (Ser159). Glu166 (proton acceptor) is an active-site residue. Position 173 is a phosphothreonine (Thr173). An N6-acetyllysine; alternate modification is found at Lys194. An N6-succinyllysine; alternate modification is found at Lys194. Residue Lys194 is modified to N6-methyllysine; alternate. Residue Ser198 is modified to Phosphoserine. Tyr209 carries the post-translational modification 3'-nitrotyrosine. Phosphoserine is present on Ser212. Thr214 is modified (phosphothreonine). At Ser223 the chain carries Phosphoserine. Lys238 bears the N6-acetyllysine mark.

Belongs to the triosephosphate isomerase family. Homodimer.

Its subcellular location is the cytoplasm. The catalysed reaction is dihydroxyacetone phosphate = methylglyoxal + phosphate. It carries out the reaction D-glyceraldehyde 3-phosphate = dihydroxyacetone phosphate. The protein operates within carbohydrate degradation; glycolysis; D-glyceraldehyde 3-phosphate from glycerone phosphate: step 1/1. It participates in carbohydrate biosynthesis; gluconeogenesis. In terms of biological role, triosephosphate isomerase is an extremely efficient metabolic enzyme that catalyzes the interconversion between dihydroxyacetone phosphate (DHAP) and D-glyceraldehyde-3-phosphate (G3P) in glycolysis and gluconeogenesis. Its function is as follows. It is also responsible for the non-negligible production of methylglyoxal a reactive cytotoxic side-product that modifies and can alter proteins, DNA and lipids. The protein is Triosephosphate isomerase (TPI1) of Canis lupus familiaris (Dog).